Consider the following 362-residue polypeptide: tRNA/tmRNA (uracil-C(5))-methyltransferase (362 aa).

S-adenosyl-L-methionine-binding residues include glutamine 186, tyrosine 214, asparagine 219, glutamate 235, and aspartate 295. Cysteine 320 serves as the catalytic Nucleophile. Residue glutamate 354 is the Proton acceptor of the active site.

Belongs to the class I-like SAM-binding methyltransferase superfamily. RNA M5U methyltransferase family. TrmA subfamily.

The enzyme catalyses uridine(54) in tRNA + S-adenosyl-L-methionine = 5-methyluridine(54) in tRNA + S-adenosyl-L-homocysteine + H(+). It catalyses the reaction uridine(341) in tmRNA + S-adenosyl-L-methionine = 5-methyluridine(341) in tmRNA + S-adenosyl-L-homocysteine + H(+). In terms of biological role, dual-specificity methyltransferase that catalyzes the formation of 5-methyluridine at position 54 (m5U54) in all tRNAs, and that of position 341 (m5U341) in tmRNA (transfer-mRNA). This is tRNA/tmRNA (uracil-C(5))-methyltransferase from Stutzerimonas stutzeri (strain A1501) (Pseudomonas stutzeri).